Reading from the N-terminus, the 120-residue chain is Cell division topological specificity factor (120 aa).

Positions 93–120 (LNSCEGENPQQDPGAAPSEGGHLSSPSP) are disordered.

The protein belongs to the MinE family.

Functionally, prevents the cell division inhibition by proteins MinC and MinD at internal division sites while permitting inhibition at polar sites. This ensures cell division at the proper site by restricting the formation of a division septum at the midpoint of the long axis of the cell. The protein is Cell division topological specificity factor of Synechococcus sp. (strain JA-3-3Ab) (Cyanobacteria bacterium Yellowstone A-Prime).